The chain runs to 430 residues: Bone morphogenetic protein 7 (430 aa).

The signal sequence occupies residues 1 to 29 (MHVRSLRAAAPHSFVALWAPLFLLRSALA). Residues 30 to 291 (DFSLDNEVHS…ATEVHLRSIR (262 aa)) constitute a propeptide that is removed on maturation. N-linked (GlcNAc...) asparagine glycosylation is found at Asn186, Asn301, Asn320, and Asn371. Residues 290-310 (IRSTGGKQRSQNRSKTPKNQE) are disordered. Disulfide bonds link Cys329-Cys395, Cys358-Cys427, and Cys362-Cys429.

It belongs to the TGF-beta family. As to quaternary structure, homodimer; disulfide-linked. Interacts with SOSTDC1. Interacts with TWSG1. Interacts with FBN1 (via N-terminal domain) and FBN2. Interacts with type I receptor ACVR1. Interacts with type II receptor ACVR2A. Interacts with NOG; this interaction inhibits canonical BMP signaling. Interacts with SCUBE3. Interacts with ERFE; the interaction inhibits BMP-induced transcription of HAMP. Interacts with TGFBR3.

Its subcellular location is the secreted. Growth factor of the TGF-beta superfamily that plays important role in various biological processes, including embryogenesis, hematopoiesis, neurogenesis and skeletal morphogenesis. Initiates the canonical BMP signaling cascade by associating with type I receptor ACVR1 and type II receptor ACVR2A. Once all three components are bound together in a complex at the cell surface, ACVR2A phosphorylates and activates ACVR1. In turn, ACVR1 propagates signal by phosphorylating SMAD1/5/8 that travel to the nucleus and act as activators and repressors of transcription of target genes. For specific functions such as growth cone collapse in developing spinal neurons and chemotaxis of monocytes, also uses BMPR2 as type II receptor. Can also signal through non-canonical pathways such as P38 MAP kinase signaling cascade that promotes brown adipocyte differentiation through activation of target genes, including members of the SOX family of transcription factors. Promotes the expression of HAMP, this is repressed by its interaction with ERFE. The polypeptide is Bone morphogenetic protein 7 (Bmp7) (Mus musculus (Mouse)).